An 84-amino-acid polypeptide reads, in one-letter code: Small ribosomal subunit protein eS27w (84 aa).

Residues 39 to 61 (CQGCFNITTVFSHSQTVVVCGNC) form a C4-type zinc finger.

Belongs to the eukaryotic ribosomal protein eS27 family. The cofactor is Zn(2+).

The sequence is that of Small ribosomal subunit protein eS27w (RPS27D) from Arabidopsis thaliana (Mouse-ear cress).